The primary structure comprises 467 residues: Serine/threonine-protein kinase US3 homolog (467 aa).

The tract at residues 64–155 is disordered; the sequence is GPEVAPPART…PAGGVTREEA (92 aa). Residues 99 to 111 are compositionally biased toward basic and acidic residues; it reads NERRAATGDEKES. Residues 117–144 show a composition bias toward acidic residues; that stretch reads NESESESESESESESGADDGDWDDDDDA. The Protein kinase domain maps to 164 to 462; it reads FRIIRRLTPG…AAELLEHPVF (299 aa). ATP is bound by residues 170-178 and Lys194; that span reads LTPGSEGRV. Asp279 acts as the Proton acceptor in catalysis.

The protein belongs to the protein kinase superfamily. Ser/Thr protein kinase family. In terms of processing, phosphorylated by UL13 homolog; this phosphorylation regulates subsequent phosphorylation of UL31 and UL34 homologs by US3. Autophosphorylated.

Its subcellular location is the host cytoplasm. The protein localises to the host nucleus. It carries out the reaction L-seryl-[protein] + ATP = O-phospho-L-seryl-[protein] + ADP + H(+). The enzyme catalyses L-threonyl-[protein] + ATP = O-phospho-L-threonyl-[protein] + ADP + H(+). Its function is as follows. Multifunctional serine/threonine kinase that plays a role in several processes including egress of virus particles from the nucleus, modulation of the actin cytoskeleton and inhibition of apoptosis. Phosphorylates UL31 and UL34 homologs, two critical regulators of capsid budding from nucleus to endoplasmic reticulum, thereby facilitating virion egress. Modulates and redistributes host components of the nuclear envelope, including LMNA, emerin/EMD and the nuclear matrix protein MATR3. Phosphorylates envelope glycoprotein B (gB), probably to direct it to the cell surface. Promotes virus intracellular spread by restructuring host cell cytoskeleton. Blocks host apoptosis to extend cell survival and allow efficient viral replication. Promotes viral gene expression by phosphorylating host HDAC2 to reduce viral genome silencing. This chain is Serine/threonine-protein kinase US3 homolog, found in Bos taurus (Bovine).